We begin with the raw amino-acid sequence, 481 residues long: Aspartyl/glutamyl-tRNA(Asn/Gln) amidotransferase subunit B (481 aa).

The protein belongs to the GatB/GatE family. GatB subfamily. As to quaternary structure, heterotrimer of A, B and C subunits.

The catalysed reaction is L-glutamyl-tRNA(Gln) + L-glutamine + ATP + H2O = L-glutaminyl-tRNA(Gln) + L-glutamate + ADP + phosphate + H(+). It catalyses the reaction L-aspartyl-tRNA(Asn) + L-glutamine + ATP + H2O = L-asparaginyl-tRNA(Asn) + L-glutamate + ADP + phosphate + 2 H(+). Functionally, allows the formation of correctly charged Asn-tRNA(Asn) or Gln-tRNA(Gln) through the transamidation of misacylated Asp-tRNA(Asn) or Glu-tRNA(Gln) in organisms which lack either or both of asparaginyl-tRNA or glutaminyl-tRNA synthetases. The reaction takes place in the presence of glutamine and ATP through an activated phospho-Asp-tRNA(Asn) or phospho-Glu-tRNA(Gln). In Ehrlichia chaffeensis (strain ATCC CRL-10679 / Arkansas), this protein is Aspartyl/glutamyl-tRNA(Asn/Gln) amidotransferase subunit B.